Consider the following 355-residue polypeptide: Alkanal monooxygenase alpha chain (355 aa).

This sequence belongs to the bacterial luciferase oxidoreductase family. Heterodimer of an alpha and a beta chain.

The enzyme catalyses a long-chain fatty aldehyde + FMNH2 + O2 = a long-chain fatty acid + hnu + FMN + H2O + 2 H(+). In terms of biological role, light-emitting reaction in luminous bacteria. The sequence is that of Alkanal monooxygenase alpha chain (luxA) from Vibrio harveyi (Beneckea harveyi).